Reading from the N-terminus, the 94-residue chain is uncharacterized protein (94 aa).

The next 2 membrane-spanning stretches (helical) occupy residues 7 to 24 and 39 to 61; these read IFFI…SFNV and AVPI…LLFL. The segment at 68–94 is disordered; sequence TRKQKREDSPTSAPTGGVSSPEHVDVP.

Its subcellular location is the cell membrane. This is an uncharacterized protein from Treponema pallidum (strain Nichols).